The sequence spans 115 residues: Large ribosomal subunit protein eL36 (115 aa).

This sequence belongs to the eukaryotic ribosomal protein eL36 family. Component of the large ribosomal subunit.

Its subcellular location is the cytoplasm. It localises to the cytosol. Component of the large ribosomal subunit. This chain is Large ribosomal subunit protein eL36 (RpL36), found in Drosophila melanogaster (Fruit fly).